The sequence spans 363 residues: Ribosomal RNA large subunit methyltransferase M (363 aa).

S-adenosyl-L-methionine is bound by residues Ser190, 223-226 (CPGG), Asp242, Asp262, and Asp280. Lys309 functions as the Proton acceptor in the catalytic mechanism.

Belongs to the class I-like SAM-binding methyltransferase superfamily. RNA methyltransferase RlmE family. RlmM subfamily. As to quaternary structure, monomer.

The protein resides in the cytoplasm. The catalysed reaction is cytidine(2498) in 23S rRNA + S-adenosyl-L-methionine = 2'-O-methylcytidine(2498) in 23S rRNA + S-adenosyl-L-homocysteine + H(+). Catalyzes the 2'-O-methylation at nucleotide C2498 in 23S rRNA. The protein is Ribosomal RNA large subunit methyltransferase M of Actinobacillus pleuropneumoniae serotype 5b (strain L20).